The primary structure comprises 130 residues: MTTKRKAYVRTMAPNWWQQLGFYRFYMLREGTSIPAVWFSVLLIYGVFSLKSGPAGWEGFVSFLQNPLVLFLNILTLFAALLHTKTWFELAPKAVNIIVKSEKMGPEPMIKALWVVTVVASAIILAVALL.

A run of 3 helical transmembrane segments spans residues 30–50 (EGTS…VFSL), 60–80 (FVSF…LFAA), and 110–130 (IKAL…VALL).

This sequence belongs to the FrdC family. Part of an enzyme complex containing four subunits: a flavoprotein (FrdA), an iron-sulfur protein (FrdB), and two hydrophobic anchor proteins (FrdC and FrdD).

It is found in the cell inner membrane. Two distinct, membrane-bound, FAD-containing enzymes are responsible for the catalysis of fumarate and succinate interconversion; fumarate reductase is used in anaerobic growth, and succinate dehydrogenase is used in aerobic growth. Anchors the catalytic components of the fumarate reductase complex to the cell inner membrane, binds quinones. The chain is Fumarate reductase subunit C from Yersinia pestis bv. Antiqua (strain Angola).